The sequence spans 498 residues: NAD(P)H-quinone oxidoreductase chain 4, chloroplastic (498 aa).

Helical transmembrane passes span 4-24 (LPWL…IPLL), 37-57 (LGIC…QFHL), 87-107 (MGLI…AWPV), 111-131 (VRLF…LFAS), 134-154 (ILLF…LLSM), 167-187 (FLLY…TMGL), 207-227 (IAVE…KLPI), 242-262 (HYST…YGLI), 274-294 (FLFS…ASLI), 305-325 (IAYS…SITD), 331-351 (AILQ…LAGI), 386-406 (LALP…GIVT), 417-437 (IILF…LSML), and 461-481 (IFIS…PNLV).

It belongs to the complex I subunit 4 family.

It localises to the plastid. The protein localises to the chloroplast thylakoid membrane. The enzyme catalyses a plastoquinone + NADH + (n+1) H(+)(in) = a plastoquinol + NAD(+) + n H(+)(out). It carries out the reaction a plastoquinone + NADPH + (n+1) H(+)(in) = a plastoquinol + NADP(+) + n H(+)(out). This Psilotum nudum (Whisk fern) protein is NAD(P)H-quinone oxidoreductase chain 4, chloroplastic.